The chain runs to 99 residues: Cell division topological specificity factor (99 aa).

It belongs to the MinE family.

In terms of biological role, prevents the cell division inhibition by proteins MinC and MinD at internal division sites while permitting inhibition at polar sites. This ensures cell division at the proper site by restricting the formation of a division septum at the midpoint of the long axis of the cell. The polypeptide is Cell division topological specificity factor (Tolumonas auensis (strain DSM 9187 / NBRC 110442 / TA 4)).